The following is a 222-amino-acid chain: Small ribosomal subunit protein eS1 (222 aa).

Belongs to the eukaryotic ribosomal protein eS1 family.

The sequence is that of Small ribosomal subunit protein eS1 from Pyrobaculum islandicum (strain DSM 4184 / JCM 9189 / GEO3).